The primary structure comprises 520 residues: Maturase K (520 aa).

It belongs to the intron maturase 2 family. MatK subfamily.

It is found in the plastid. The protein resides in the chloroplast. Usually encoded in the trnK tRNA gene intron. Probably assists in splicing its own and other chloroplast group II introns. This chain is Maturase K, found in Galanthus elwesii (Giant snowdrop).